The chain runs to 72 residues: Brevinin-2GHb (72 aa).

Positions 1–22 are cleaved as a signal peptide; it reads MFTMKKSLLLLFFLGTVSLSLC. Residues 23–42 constitute a propeptide that is removed on maturation; the sequence is EQERGADEDDGGEMTEELKR. Cys66 and Cys72 form a disulfide bridge.

Expressed by the skin glands.

The protein resides in the secreted. In terms of biological role, antimicrobial peptide. Active against the Gram-positive bacteria S.aureus FDA209P (MIC=16.5 ug/ml) and B.subtilis ATCC 6633 (MIC&gt;64 ug/ml), and the Gram-negative bacteria E.coli O111 (MIC=8.2 ug/ml) and E.coli ATCC 25922 (MIC=8.2 ug/ml). Not active against the fungus C.albicans. This Sylvirana guentheri (Gunther's frog) protein is Brevinin-2GHb.